Consider the following 1388-residue polypeptide: DNA-directed RNA polymerase subunit beta'' (1388 aa).

Residues Cys-224, Cys-294, Cys-301, and Cys-304 each contribute to the Zn(2+) site.

This sequence belongs to the RNA polymerase beta' chain family. RpoC2 subfamily. In terms of assembly, in plastids the minimal PEP RNA polymerase catalytic core is composed of four subunits: alpha, beta, beta', and beta''. When a (nuclear-encoded) sigma factor is associated with the core the holoenzyme is formed, which can initiate transcription. It depends on Zn(2+) as a cofactor.

It localises to the plastid. The protein resides in the chloroplast. It carries out the reaction RNA(n) + a ribonucleoside 5'-triphosphate = RNA(n+1) + diphosphate. Its function is as follows. DNA-dependent RNA polymerase catalyzes the transcription of DNA into RNA using the four ribonucleoside triphosphates as substrates. The sequence is that of DNA-directed RNA polymerase subunit beta'' from Phalaenopsis aphrodite subsp. formosana (Moth orchid).